The sequence spans 150 residues: Large ribosomal subunit protein uL13 (150 aa).

The segment at 127–150 (KGTEHPHSAQKPQPLQLNPSATAK) is disordered. A compositionally biased stretch (polar residues) spans 136-150 (QKPQPLQLNPSATAK).

The protein belongs to the universal ribosomal protein uL13 family. As to quaternary structure, part of the 50S ribosomal subunit.

This protein is one of the early assembly proteins of the 50S ribosomal subunit, although it is not seen to bind rRNA by itself. It is important during the early stages of 50S assembly. The sequence is that of Large ribosomal subunit protein uL13 from Synechococcus sp. (strain CC9902).